Here is a 296-residue protein sequence, read N- to C-terminus: 4-hydroxybenzoate octaprenyltransferase (296 aa).

The next 8 membrane-spanning stretches (helical) occupy residues Pro-28 to Gly-48, Leu-52 to Ile-72, Ala-102 to Ser-122, Thr-145 to Ala-167, Gly-174 to Val-196, Ser-219 to Phe-239, Leu-241 to Trp-261, and Phe-275 to Leu-295.

This sequence belongs to the UbiA prenyltransferase family. Requires Mg(2+) as cofactor.

The protein localises to the cell inner membrane. It carries out the reaction all-trans-octaprenyl diphosphate + 4-hydroxybenzoate = 4-hydroxy-3-(all-trans-octaprenyl)benzoate + diphosphate. The protein operates within cofactor biosynthesis; ubiquinone biosynthesis. Its function is as follows. Catalyzes the prenylation of para-hydroxybenzoate (PHB) with an all-trans polyprenyl group. Mediates the second step in the final reaction sequence of ubiquinone-8 (UQ-8) biosynthesis, which is the condensation of the polyisoprenoid side chain with PHB, generating the first membrane-bound Q intermediate 3-octaprenyl-4-hydroxybenzoate. The protein is 4-hydroxybenzoate octaprenyltransferase of Pseudomonas putida (strain ATCC 700007 / DSM 6899 / JCM 31910 / BCRC 17059 / LMG 24140 / F1).